Here is a 596-residue protein sequence, read N- to C-terminus: DNA polymerase kappa (596 aa).

A UmuC domain is found at 85 to 320; that stretch reads CVCIDMDAYF…LPIRKVGGIG (236 aa). Positions 89 and 180 each coordinate Mg(2+). Glutamate 181 is an active-site residue. A UBZ4-type zinc finger spans residues 516 to 545; sequence TRPCPICGTDVENRLDVMNCHVDECILKVQ. Zn(2+) is bound by residues cysteine 519, cysteine 522, histidine 536, and cysteine 540. A disordered region spans residues 559-584; it reads NKSTQKPERPSTKKRKLQEKRPKAKK. A compositionally biased stretch (basic residues) spans 570–584; sequence TKKRKLQEKRPKAKK.

It belongs to the DNA polymerase type-Y family. It depends on Mg(2+) as a cofactor. Requires Mn(2+) as cofactor.

The protein resides in the nucleus. The catalysed reaction is DNA(n) + a 2'-deoxyribonucleoside 5'-triphosphate = DNA(n+1) + diphosphate. Functionally, DNA polymerase specifically involved in DNA repair. Plays an important role in translesion synthesis, where the normal high-fidelity DNA polymerases cannot proceed and DNA synthesis stalls. Depending on the context, it inserts the correct base, but causes frequent base transitions, transversions and frameshifts. Lacks 3'-5' proofreading exonuclease activity. Forms a Schiff base with 5'-deoxyribose phosphate at abasic sites, but does not have lyase activity. In Caenorhabditis elegans, this protein is DNA polymerase kappa (polk-1).